Consider the following 642-residue polypeptide: Threonine--tRNA ligase (642 aa).

The TGS domain occupies 1-61; the sequence is MPVITLPDGS…ESDAQLAIIT (61 aa). Residues 243 to 534 form a catalytic region; the sequence is DHRKIGKQLD…LTEEYAGFYP (292 aa). Zn(2+) is bound by residues Cys-334, His-385, and His-511.

Belongs to the class-II aminoacyl-tRNA synthetase family. As to quaternary structure, homodimer. Zn(2+) serves as cofactor.

The protein localises to the cytoplasm. The catalysed reaction is tRNA(Thr) + L-threonine + ATP = L-threonyl-tRNA(Thr) + AMP + diphosphate + H(+). Functionally, catalyzes the attachment of threonine to tRNA(Thr) in a two-step reaction: L-threonine is first activated by ATP to form Thr-AMP and then transferred to the acceptor end of tRNA(Thr). Also edits incorrectly charged L-seryl-tRNA(Thr). This chain is Threonine--tRNA ligase, found in Serratia proteamaculans (strain 568).